The following is a 544-amino-acid chain: pH-responsive protein 2 (544 aa).

Positions 1-22 (MLLKSLFPSILAATSFVSSVAA) are cleaved as a signal peptide. Residues N40 and N59 are each glycosylated (N-linked (GlcNAc...) asparagine). C72 and C101 are joined by a disulfide. N147 carries N-linked (GlcNAc...) asparagine glycosylation. 5 disulfide bridges follow: C214–C347, C232–C263, C369–C420, C378–C444, and C397–C402. The N-linked (GlcNAc...) asparagine glycan is linked to N408. The disordered stretch occupies residues 469 to 514 (GSSGLGTVSGTVRTDTSQSTSDSGSGSSSSSSSSSSSSSSGSSGSK). S515 carries the GPI-anchor amidated serine lipid modification. Residues 516–544 (AASIVSVNLLTKIATIGISIVVGFGLITM) constitute a propeptide, removed in mature form.

It belongs to the glycosyl hydrolase 72 family.

The protein localises to the cell membrane. Its function is as follows. Required for apical cell growth and plays an essential role in morphogenesis. May be integral to the pathogenic ability of the organism. The protein is pH-responsive protein 2 (PHR2) of Candida albicans (strain SC5314 / ATCC MYA-2876) (Yeast).